The chain runs to 889 residues: Terminal uridylyltransferase 3 (889 aa).

The C2H2-type; atypical zinc finger occupies 123–151 (VRCDLCAKMIESRDEEQIQEHFQVHHAAL). Positions 125, 128, 143, and 148 each coordinate Zn(2+). Residues Ser225 and 236-239 (SDAD) contribute to the UTP site. Positions 237 and 239 each coordinate Mg(2+). Arg286 lines the RNA pocket. UTP contacts are provided by residues 394 to 398 (GVRNS), Lys419, Lys423, and 437 to 438 (SY). One can recognise a PAP-associated domain in the interval 505-572 (LGGLIPLFFL…LCIDDPYEDN (68 aa)). A Nucleotide recognition motif (NRM) motif is present at residues 565-574 (IDDPYEDNFN). 2 disordered regions span residues 675–702 (NNKSKEGDDDAEGVTNNQEGEPPDHVES) and 829–849 (RKKSKGSKKRKNAVRRGNHAG). Positions 829–846 (RKKSKGSKKRKNAVRRGN) are enriched in basic residues.

It belongs to the DNA polymerase type-B-like family. Mg(2+) is required as a cofactor. Requires Mn(2+) as cofactor.

It is found in the cytoplasm. It carries out the reaction RNA(n) + UTP = RNA(n)-3'-uridine ribonucleotide + diphosphate. In terms of biological role, terminal uridylyltransferase which catalyzes the addition of Us to the 3'-hydroxyl group of single-stranded RNAs. Does not mediate RNA-independent UTP polymerization. In Trypanosoma brucei brucei, this protein is Terminal uridylyltransferase 3.